The following is a 493-amino-acid chain: MAALLVFFSVSLILLAVLFHKRKSSLSSRKRPPPSPLRLPVIGHFHLIGALSHRSFTSLSKRYGEVMLLHFGSAPVLVASSAAAAREIMKNQDVIFASRPRLSIFDRLMYSGKGVAFAPYGEHWRNARSMCMLQLLSAKRVQSFGGIREEETSAMIEKIRRSKPTTVVNLSEMFMALTNGVIHRAVLGRKGDGGDDFNRILIKVIKLLGSFNVGDYVPWLSWINRINGVDAEVEKVGTKLDGSMEGILRKYRRKKVGDDETNFVDTLLQFQRESKDTDPVEDDVIKALIFDMVSAGTDTTFAALEWTMAELIKNPRTLKTLQNEVREVSRNKGGITEDDVDKMPYLKAVSKEILRLHPPFAILLPRELTQDANMLGYDIPRGTVVLVNNWAISRDPSLWENPEEFRPERFLETSIDYKGLHFEMLPFGSGRRGCPGSTFAMALYELALSKLVNEFDFRLGNGDRAEDLDMTEAPGFVVHKKSPLLVLATPRQS.

M1 is a topological domain (cytoplasmic). A helical; Signal-anchor for type II membrane protein transmembrane segment spans residues 2–19 (AALLVFFSVSLILLAVLF). Topologically, residues 20–493 (HKRKSSLSSR…LLVLATPRQS (474 aa)) are lumenal. N-linked (GlcNAc...) asparagine glycosylation is present at N169. C434 provides a ligand contact to heme.

Belongs to the cytochrome P450 family. Heme serves as cofactor.

It is found in the membrane. The catalysed reaction is (R)-pulegone + reduced [NADPH--hemoprotein reductase] + O2 = (R)-menthofuran + oxidized [NADPH--hemoprotein reductase] + 2 H2O + H(+). It participates in secondary metabolite biosynthesis; terpenoid biosynthesis. In terms of biological role, monoterpene synthase that catalyzes the formation of (+)-menthofuran from (+)-pulegone. This chain is (+)-menthofuran synthase, found in Mentha piperita (Peppermint).